A 100-amino-acid chain; its full sequence is Putative protein BCL8 (100 aa).

As to expression, expressed in prostate and testis.

The polypeptide is Putative protein BCL8 (NBEAP1) (Homo sapiens (Human)).